Reading from the N-terminus, the 116-residue chain is Peptidyl-tRNA hydrolase (116 aa).

This sequence belongs to the PTH2 family.

The protein resides in the cytoplasm. It carries out the reaction an N-acyl-L-alpha-aminoacyl-tRNA + H2O = an N-acyl-L-amino acid + a tRNA + H(+). In terms of biological role, the natural substrate for this enzyme may be peptidyl-tRNAs which drop off the ribosome during protein synthesis. This Methanopyrus kandleri (strain AV19 / DSM 6324 / JCM 9639 / NBRC 100938) protein is Peptidyl-tRNA hydrolase.